The following is a 255-amino-acid chain: CCAAT/enhancer-binding protein delta (255 aa).

Disordered regions lie at residues methionine 1–alanine 42, glycine 91–leucine 121, and proline 138–glutamine 206. Lysine 107 is covalently cross-linked (Glycyl lysine isopeptide (Lys-Gly) (interchain with G-Cter in SUMO)). Residues glutamine 141–glycine 161 show a composition bias toward pro residues. Residues alanine 163–asparagine 187 show a composition bias toward basic and acidic residues. The region spanning serine 177–leucine 240 is the bZIP domain. A basic motif region spans residues arginine 181–lysine 208. A leucine-zipper region spans residues leucine 212–leucine 240.

The protein belongs to the bZIP family. C/EBP subfamily. As to quaternary structure, binds DNA as a homodimer and as a heterodimer. Can form stable heterodimers with CEBPA, CEBPB and CEBPE. Directly interacts with SPI1/PU.1; this interaction does not affect DNA-binding properties of each partner. Interacts with PRDM16.

It localises to the nucleus. Transcription activator that recognizes two different DNA motifs: the CCAAT homology common to many promoters and the enhanced core homology common to many enhancers. Important transcription factor regulating the expression of genes involved in immune and inflammatory responses. Transcriptional activator that enhances IL6 transcription alone and as heterodimer with CEBPB. In Ovis aries (Sheep), this protein is CCAAT/enhancer-binding protein delta (CEBPD).